Reading from the N-terminus, the 340-residue chain is Pre-rRNA-processing protein esf-2 (340 aa).

2 stretches are compositionally biased toward basic and acidic residues: residues 1–12 (MPEDDVRNKFLD) and 19–32 (DAGH…DFQK). A disordered region spans residues 1–103 (MPEDDVRNKF…KSVLASDLPG (103 aa)). Residues 44–64 (DDEDSEADDFTDAEEEHDQDD) show a composition bias toward acidic residues. Residues 65–95 (AESKDAPAKDGQETTDGKEKKDGKKEKEKKS) show a composition bias toward basic and acidic residues. The 91-residue stretch at 124–214 (GVVYISRVPP…KKGSYYRDDI (91 aa)) folds into the RRM domain. The segment at 272-329 (AKKASKGSKAGGEGAAQVTESTIPSAAATTTTTTNDDKRRTFKQIPLAKKRKLDETQP) is disordered.

It belongs to the ESF2/ABP1 family.

The protein resides in the nucleus. It localises to the nucleolus. Functionally, involved in the small subunit (SSU) processome assembly and function, and in the 18S rRNA synthesis. Required for the early cleavages at sites A0, A1 and A2. This Neurospora crassa (strain ATCC 24698 / 74-OR23-1A / CBS 708.71 / DSM 1257 / FGSC 987) protein is Pre-rRNA-processing protein esf-2 (esf-2).